The sequence spans 184 residues: Lactoylglutathione lyase (184 aa).

Ala-2 is subject to N-acetylalanine. Cys-19 and Cys-20 are joined by a disulfide. The VOC domain maps to 31 to 177 (LLQQTMLRIK…DGYWIEILNP (147 aa)). Residues Gln-34 and Arg-38 each contribute to the substrate site. Gln-34 lines the Zn(2+) pocket. Residue Lys-88 is modified to N6-succinyllysine. Glu-100 provides a ligand contact to Zn(2+). Residue Asn-104 coordinates substrate. Phosphothreonine is present on Thr-107. Substrate-binding residues include Arg-123 and His-127. Residue His-127 participates in Zn(2+) binding. Residue Cys-139 is modified to S-glutathionyl cysteine. The residue at position 148 (Lys-148) is an N6-acetyllysine; alternate. At Lys-148 the chain carries N6-succinyllysine; alternate. Residue 157-158 (KM) participates in substrate binding. Zn(2+) is bound at residue Glu-173. The Proton donor/acceptor role is filled by Glu-173.

It belongs to the glyoxalase I family. Homodimer. The cofactor is Zn(2+). Post-translationally, glutathionylation at Cys-139 inhibits enzyme activity. Phosphorylated at Thr-107 in the presence of CaMK2. However, this is a consensus site for phosphorylation by CK2 so phosphorylation may be mediated by CK2 rather than CaMK2. Phosphorylation is induced by TNF and suppresses the TNF-induced transcriptional activity of NF-kappa-B. In terms of processing, exists in a nitric oxide (NO)-modified form. The exact nature of the modification is unknown, but it suppresses the TNF-induced transcriptional activity of NF-kappa-B.

It catalyses the reaction (R)-S-lactoylglutathione = methylglyoxal + glutathione. Its pathway is secondary metabolite metabolism; methylglyoxal degradation; (R)-lactate from methylglyoxal: step 1/2. With respect to regulation, subject to competitive inhibition by methyl-gerfelin. Its function is as follows. Catalyzes the conversion of hemimercaptal, formed from methylglyoxal and glutathione, to S-lactoylglutathione. Involved in the regulation of TNF-induced transcriptional activity of NF-kappa-B. Required for normal osteoclastogenesis. The protein is Lactoylglutathione lyase (Glo1) of Mus musculus (Mouse).